A 255-amino-acid polypeptide reads, in one-letter code: 4-hydroxy-tetrahydrodipicolinate reductase (255 aa).

Residues 9-14 (GFKGRM), 89-91 (GTT), and 115-118 (APNF) each bind NAD(+). The Proton donor/acceptor role is filled by His145. His146 contacts (S)-2,3,4,5-tetrahydrodipicolinate. Catalysis depends on Lys149, which acts as the Proton donor. 155–156 (GT) lines the (S)-2,3,4,5-tetrahydrodipicolinate pocket.

Belongs to the DapB family.

It is found in the cytoplasm. It catalyses the reaction (S)-2,3,4,5-tetrahydrodipicolinate + NAD(+) + H2O = (2S,4S)-4-hydroxy-2,3,4,5-tetrahydrodipicolinate + NADH + H(+). It carries out the reaction (S)-2,3,4,5-tetrahydrodipicolinate + NADP(+) + H2O = (2S,4S)-4-hydroxy-2,3,4,5-tetrahydrodipicolinate + NADPH + H(+). The protein operates within amino-acid biosynthesis; L-lysine biosynthesis via DAP pathway; (S)-tetrahydrodipicolinate from L-aspartate: step 4/4. Functionally, catalyzes the conversion of 4-hydroxy-tetrahydrodipicolinate (HTPA) to tetrahydrodipicolinate. The polypeptide is 4-hydroxy-tetrahydrodipicolinate reductase (Streptococcus thermophilus (strain CNRZ 1066)).